Here is a 139-residue protein sequence, read N- to C-terminus: ATP synthase epsilon chain (139 aa).

This sequence belongs to the ATPase epsilon chain family. As to quaternary structure, F-type ATPases have 2 components, CF(1) - the catalytic core - and CF(0) - the membrane proton channel. CF(1) has five subunits: alpha(3), beta(3), gamma(1), delta(1), epsilon(1). CF(0) has three main subunits: a, b and c.

It is found in the cell inner membrane. Functionally, produces ATP from ADP in the presence of a proton gradient across the membrane. The protein is ATP synthase epsilon chain of Pseudomonas syringae pv. tomato (strain ATCC BAA-871 / DC3000).